The sequence spans 659 residues: RNA-binding E3 ubiquitin-protein ligase MEX3C (659 aa).

Low complexity predominate over residues 1–15 (MPSGSSAALALAAAP). The tract at residues 1–140 (MPSGSSAALA…EEAEEEDRSS (140 aa)) is disordered. The span at 16–37 (APLPQPPPPPPPPPPPLPPPSG) shows a compositional bias: pro residues. A compositionally biased stretch (low complexity) spans 64–82 (EPGAPALRAPAAAAQGQAR). Residues 83 to 94 (RAAELSPEERAP) show a composition bias toward basic and acidic residues. Residue Ser-88 is modified to Phosphoserine. A compositionally biased stretch (acidic residues) spans 104–137 (AELELEEDEEEGEEAELDGDLLEEEELEEAEEED). KH domains follow at residues 232–293 (TTEC…KREI) and 326–387 (QTTV…REEI). The segment at 513–569 (FEPVNPLSGFGSDPSGNMKTQRRGSQPSTPRLSPTFPESIEHPLARRVRSDPPSTGN) is disordered. Residues 526–544 (PSGNMKTQRRGSQPSTPRL) show a composition bias toward polar residues. Residues Ser-537 and Ser-545 each carry the phosphoserine modification. The span at 551–562 (SIEHPLARRVRS) shows a compositional bias: basic and acidic residues. The RING-type zinc finger occupies 608-648 (CVICFENEVIAALVPCGHNLFCMECANKICEKRTPSCPVCQ).

Interacts with USP7, which antagonizes the ability to degrade mRNA. As to expression, highest levels found in fetal brain and testis. Also expressed in thymus, salivary gland and uterus. Highly expressed in cells of the innate immune system, in particular activated NK cells. Week expression in the intestine.

It localises to the cytoplasm. The protein localises to the nucleus. It carries out the reaction S-ubiquitinyl-[E2 ubiquitin-conjugating enzyme]-L-cysteine + [acceptor protein]-L-lysine = [E2 ubiquitin-conjugating enzyme]-L-cysteine + N(6)-ubiquitinyl-[acceptor protein]-L-lysine.. In terms of biological role, E3 ubiquitin ligase responsible for the post-transcriptional regulation of common HLA-A allotypes. Binds to the 3' UTR of HLA-A2 mRNA, and regulates its levels by promoting mRNA decay. RNA binding is sufficient to prevent translation, but ubiquitin ligase activity is required for mRNA degradation. This chain is RNA-binding E3 ubiquitin-protein ligase MEX3C (MEX3C), found in Homo sapiens (Human).